Consider the following 629-residue polypeptide: Phosphomethylpyrimidine synthase (629 aa).

The segment at 1 to 24 is disordered; the sequence is MSTKPKNAAHLSESAQVDSGSVQP. The span at 13–24 shows a compositional bias: polar residues; it reads ESAQVDSGSVQP. Residues Asn233, Met262, Tyr291, His327, 347 to 349, 388 to 391, and Glu427 each bind substrate; these read SRG and DGLR. Zn(2+) is bound at residue His431. Residue Tyr454 participates in substrate binding. A Zn(2+)-binding site is contributed by His495. [4Fe-4S] cluster contacts are provided by Cys575, Cys578, and Cys583.

The protein belongs to the ThiC family. In terms of assembly, homodimer. The cofactor is [4Fe-4S] cluster.

The catalysed reaction is 5-amino-1-(5-phospho-beta-D-ribosyl)imidazole + S-adenosyl-L-methionine = 4-amino-2-methyl-5-(phosphooxymethyl)pyrimidine + CO + 5'-deoxyadenosine + formate + L-methionine + 3 H(+). It participates in cofactor biosynthesis; thiamine diphosphate biosynthesis. In terms of biological role, catalyzes the synthesis of the hydroxymethylpyrimidine phosphate (HMP-P) moiety of thiamine from aminoimidazole ribotide (AIR) in a radical S-adenosyl-L-methionine (SAM)-dependent reaction. The protein is Phosphomethylpyrimidine synthase of Pseudomonas syringae pv. tomato (strain ATCC BAA-871 / DC3000).